The chain runs to 247 residues: C-type lectin domain family 7 member A (247 aa).

The Cytoplasmic portion of the chain corresponds to 1–44; that stretch reads MEYHPDLENLDEDGYTQLHFDSRSNTRIAVVSEKGSCVASPPWR. Residues 15–18 carry the ITAM-like motif; that stretch reads YTQL. A helical; Signal-anchor for type II membrane protein transmembrane segment spans residues 45-65; sequence LIAVILGILCLVILVIAVVLG. Over 66-247 the chain is Extracellular; sequence TMAIWRPNSG…CSICEKKFSM (182 aa). Residues 81–105 form a disordered region; sequence NGYFPSRNKENHSQPTQSPLEESVT. A glycan (N-linked (GlcNAc...) asparagine) is linked at Asn-91. Over residues 93-105 the composition is skewed to polar residues; sequence SQPTQSPLEESVT. Disulfide bonds link Cys-120–Cys-131, Cys-148–Cys-241, and Cys-220–Cys-233. A C-type lectin domain is found at 127–242; sequence YEKSCYLFSP…CSVPSCSICE (116 aa). Residue 146 to 153 participates in (1,3-beta-D-glucosyl)n binding; that stretch reads RQCSQLGS. A divalent metal cation-binding residues include Lys-157, Asp-159, and Glu-163. Glu-195 is a binding site for (1,3-beta-D-glucosyl)n. Glu-242 contacts a divalent metal cation.

As to quaternary structure, homodimer. Interacts with SYK; participates in leukocyte activation in presence of fungal pathogens. Interacts with CD37; this interaction controls CLEC7A-mediated IL-6 production. Post-translationally, phosphorylated on tyrosine residues in response to beta-glucan binding. As to expression, detected in dendritic cells, in paracortical and medullary regions of lymph nodes, and in spleen red pulp and white pulp.

It localises to the cell membrane. In terms of biological role, lectin that functions as a pattern recognizing receptor (PRR) specific for beta-1,3-linked and beta-1,6-linked glucans, which constitute cell wall constituents from pathogenic bacteria and fungi. Necessary for the TLR2-mediated inflammatory response and activation of NF-kappa-B: upon beta-glucan binding, recruits SYK via its ITAM motif and promotes a signaling cascade that activates some CARD domain-BCL10-MALT1 (CBM) signalosomes, leading to the activation of NF-kappa-B and MAP kinase p38 (MAPK11, MAPK12, MAPK13 and/or MAPK14) pathways which stimulate expression of genes encoding pro-inflammatory cytokines and chemokines. Enhances cytokine production in macrophages and dendritic cells. Mediates production of reactive oxygen species in the cell. Mediates phagocytosis of C.albicans conidia. Binds T-cells in a way that does not involve their surface glycans and plays a role in T-cell activation. Stimulates T-cell proliferation. Induces phosphorylation of SCIMP after binding beta-glucans. In Macaca mulatta (Rhesus macaque), this protein is C-type lectin domain family 7 member A (CLEC7A).